A 71-amino-acid chain; its full sequence is Small ribosomal subunit protein bS21 (71 aa).

The protein belongs to the bacterial ribosomal protein bS21 family.

The chain is Small ribosomal subunit protein bS21 from Cellvibrio japonicus (strain Ueda107) (Pseudomonas fluorescens subsp. cellulosa).